Consider the following 132-residue polypeptide: Putative RNase AF_2433 (132 aa).

Active-site residues include arginine 90 and histidine 95. The RX(4)HXY motif motif lies at 90-97 (RNWLVHRY). Position 97 is an O-di-AMP-tyrosine (tyrosine 97).

This sequence belongs to the HepT RNase toxin family. As to quaternary structure, homodimer, probably forms a complex with cognate antitoxin AF_2432. In terms of processing, modified by cognate antitoxin AF_2432; probably at least 2 successive AMPylation events occur on Tyr-97.

Probable toxic component of a putative type VII toxin-antitoxin (TA) system, probably an RNase. Probably neutralized by cognate antitoxin AF_2432. Neutralization may be due to AMPylation by AF_2432. In Archaeoglobus fulgidus (strain ATCC 49558 / DSM 4304 / JCM 9628 / NBRC 100126 / VC-16), this protein is Putative RNase AF_2433.